Here is a 372-residue protein sequence, read N- to C-terminus: Fatty acid conjugase FAC2 B (372 aa).

The next 2 membrane-spanning stretches (helical) occupy residues 44-64 (YFLF…SNYI) and 74-94 (IVWP…WMIG). The short motif at 95–99 (HECGH) is the Histidine box-1 element. A Histidine box-2 motif is present at residues 131-135 (HRNHH). The next 3 membrane-spanning stretches (helical) occupy residues 166–186 (IGLM…YIMF), 217–237 (VLFS…IVTV), and 240–260 (AMPA…ILFA). The Histidine box-3 motif lies at 304–308 (HVIHH).

It belongs to the fatty acid desaturase type 1 family. As to expression, expressed exclusively in the developing seeds. Not detected in leaves.

The protein localises to the microsome membrane. It catalyses the reaction a (9Z,12Z)-octadecadienoyl-containing glycerolipid + AH2 + O2 = a (8E,10E,12Z)-octadecatrienoyl-containing glycerolipid + A + 2 H2O. It participates in lipid metabolism; polyunsaturated fatty acid biosynthesis. Its function is as follows. Fatty acid conjugase converting 18:2(9Z, 12Z) to calendic acid 18:3(8E, 10E, 12Z). Converts alpha-linolenic acid (18:3(9Z, 12Z, 15Z)) into 18:4(8E, 10E, 12Z, 15Z). Also has weak activity on the mono-unsaturates 16:1(9Z) and 18:1(9Z) producing two conjugated double bonds at delta(8) and delta(10) position. The sequence is that of Fatty acid conjugase FAC2 B from Calendula officinalis (Pot marigold).